Consider the following 395-residue polypeptide: Acid ceramidase (395 aa).

The N-terminal stretch at 1 to 21 (MPGRSRVALVLLAAAVSCAVA) is a signal peptide. A disulfide bridge connects residues cysteine 31 and cysteine 340. The active-site Nucleophile is the cysteine 143. Residues asparagine 195, asparagine 259, asparagine 286, and asparagine 342 are each glycosylated (N-linked (GlcNAc...) asparagine). The cysteines at positions 388 and 392 are disulfide-linked.

This sequence belongs to the acid ceramidase family. In terms of assembly, heterodimer; disulfide-linked. The heterodimer is composed of the disulfide-linked alpha and beta chains produced by autocatalytic cleavage of the precursor. In terms of processing, N-glycosylated. Post-translationally, proteolytically cleaved into two chains alpha and beta that remain associated via a disulfide bond. Cleavage gives rise to a conformation change that activates the enzyme. The same catalytic Cys residue mediates the autoproteolytic cleavage and subsequent hydrolysis of lipid substrates. The beta chain may undergo an additional C-terminal processing.

It is found in the lysosome. Its subcellular location is the secreted. It catalyses the reaction an N-acylsphing-4-enine + H2O = sphing-4-enine + a fatty acid. The enzyme catalyses N-dodecanoylsphing-4-enine + H2O = dodecanoate + sphing-4-enine. It carries out the reaction N-tetradecanoylsphing-4-enine + H2O = tetradecanoate + sphing-4-enine. The catalysed reaction is N-hexadecanoylsphing-4-enine + H2O = sphing-4-enine + hexadecanoate. It catalyses the reaction N-octadecanoylsphing-4-enine + H2O = sphing-4-enine + octadecanoate. The enzyme catalyses N-dodecanoyl-(4R)-hydroxysphinganine + H2O = (4R)-hydroxysphinganine + dodecanoate. It carries out the reaction N-(dodecanoyl)-sphinganine + H2O = dodecanoate + sphinganine. The catalysed reaction is N-(acetyl)-sphing-4-enine + H2O = sphing-4-enine + acetate. It catalyses the reaction N-(hexanoyl)sphing-4-enine + H2O = hexanoate + sphing-4-enine. The enzyme catalyses N-octanoylsphing-4-enine + H2O = octanoate + sphing-4-enine. It carries out the reaction N-(9Z-octadecenoyl)-sphing-4-enine + H2O = sphing-4-enine + (9Z)-octadecenoate. The catalysed reaction is N-dodecanoylethanolamine + H2O = dodecanoate + ethanolamine. The protein operates within lipid metabolism; sphingolipid metabolism. Its function is as follows. Lysosomal ceramidase that hydrolyzes sphingolipid ceramides into sphingosine and free fatty acids at acidic pH. Ceramides, sphingosine, and its phosphorylated form sphingosine-1-phosphate are bioactive lipids that mediate cellular signaling pathways regulating several biological processes including cell proliferation, apoptosis and differentiation. Has a higher catalytic efficiency towards C12-ceramides versus other ceramides. Also catalyzes the reverse reaction allowing the synthesis of ceramides from fatty acids and sphingosine. For the reverse synthetic reaction, the natural sphingosine D-erythro isomer is more efficiently utilized as a substrate compared to D-erythro-dihydrosphingosine and D-erythro-phytosphingosine, while the fatty acids with chain lengths of 12 or 14 carbons are the most efficiently used. Also has an N-acylethanolamine hydrolase activity. By regulating the levels of ceramides, sphingosine and sphingosine-1-phosphate in the epidermis, mediates the calcium-induced differentiation of epidermal keratinocytes. Also indirectly regulates tumor necrosis factor/TNF-induced apoptosis. By regulating the intracellular balance between ceramides and sphingosine, in adrenocortical cells, probably also acts as a regulator of steroidogenesis. The sequence is that of Acid ceramidase from Pan troglodytes (Chimpanzee).